Here is a 358-residue protein sequence, read N- to C-terminus: Peptide chain release factor 1 (358 aa).

Gln-233 bears the N5-methylglutamine mark.

This sequence belongs to the prokaryotic/mitochondrial release factor family. In terms of processing, methylated by PrmC. Methylation increases the termination efficiency of RF1.

Its subcellular location is the cytoplasm. Its function is as follows. Peptide chain release factor 1 directs the termination of translation in response to the peptide chain termination codons UAG and UAA. The polypeptide is Peptide chain release factor 1 (Brevibacillus brevis (strain 47 / JCM 6285 / NBRC 100599)).